The following is a 421-amino-acid chain: ATP-dependent RNA helicase RhlB (421 aa).

The short motif at 9-37 (QKFSDFALHPQVVEALEKKGFYNCTPIQA) is the Q motif element. In terms of domain architecture, Helicase ATP-binding spans 40 to 219 (LPLTLAGRDV…FEQMNNAEYV (180 aa)). ATP is bound at residue 53-60 (AQTGTGKT). The short motif at 165 to 168 (DEAD) is the DEAD box element. In terms of domain architecture, Helicase C-terminal spans 245 to 390 (RLLQTLIEEE…VSKYNPEALM (146 aa)). The segment at 396-421 (PLRLTRSRPGNGPRRAGAPRNRRRSG) is disordered. A compositionally biased stretch (low complexity) spans 402 to 414 (SRPGNGPRRAGAP).

This sequence belongs to the DEAD box helicase family. RhlB subfamily. As to quaternary structure, component of the RNA degradosome, which is a multiprotein complex involved in RNA processing and mRNA degradation.

It localises to the cytoplasm. It catalyses the reaction ATP + H2O = ADP + phosphate + H(+). Functionally, DEAD-box RNA helicase involved in RNA degradation. Has RNA-dependent ATPase activity and unwinds double-stranded RNA. In Salmonella paratyphi A (strain AKU_12601), this protein is ATP-dependent RNA helicase RhlB.